The sequence spans 1900 residues: Phosphatidylinositol 4-kinase STT4 (1900 aa).

Ser459 is subject to Phosphoserine. The PIK helical domain maps to 1345-1530 (KIEGADSNEL…KPTLDRIRER (186 aa)). The pleckstrin homology (PH) domain conferring phosphoinositide binding specificity stretch occupies residues 1531–1648 (MVSSFSQSHR…EKWQAAIFKV (118 aa)). The region spanning 1617 to 1884 (FMATFKIKKD…LIRKSYESIF (268 aa)) is the PI3K/PI4K catalytic domain. Positions 1623 to 1629 (IKKDVKD) are G-loop. Residues 1751-1759 (QFKDRHNGN) form a catalytic loop region. The interval 1770-1794 (HIDFGFIFDIVPGGIKFEAVPFKLT) is activation loop.

The protein belongs to the PI3/PI4-kinase family. Type III PI4K subfamily.

The enzyme catalyses a 1,2-diacyl-sn-glycero-3-phospho-(1D-myo-inositol) + ATP = a 1,2-diacyl-sn-glycero-3-phospho-(1D-myo-inositol 4-phosphate) + ADP + H(+). In terms of biological role, acts on phosphatidylinositol (PI) in the first committed step in the production of the second messenger inositol 1,4,5,-trisphosphate. STT4 functions in PKC1 protein kinase pathway. The chain is Phosphatidylinositol 4-kinase STT4 (STT4) from Saccharomyces cerevisiae (strain ATCC 204508 / S288c) (Baker's yeast).